The primary structure comprises 75 residues: OcyC3 (75 aa).

Positions methionine 1–alanine 22 are cleaved as a signal peptide. Positions glutamate 51 to glutamine 75 are excised as a propeptide.

In terms of tissue distribution, expressed by the venom gland.

It is found in the secreted. It localises to the target cell membrane. In terms of biological role, amphipathic peptide with probable antimicrobial activity. May act by disrupting the integrity of the bacterial cell membrane. In Opisthacanthus cayaporum (South American scorpion), this protein is OcyC3.